We begin with the raw amino-acid sequence, 268 residues long: Type III pantothenate kinase 1 (268 aa).

ATP is bound at residue 6-13 (DIGNTNIT). Residues Tyr100 and 107–110 (GTDR) contribute to the substrate site. The Proton acceptor role is filled by Asp109. Asp133 is a K(+) binding site. Thr136 serves as a coordination point for ATP.

Belongs to the type III pantothenate kinase family. In terms of assembly, homodimer. The cofactor is NH4(+). K(+) serves as cofactor.

The protein localises to the cytoplasm. The catalysed reaction is (R)-pantothenate + ATP = (R)-4'-phosphopantothenate + ADP + H(+). The protein operates within cofactor biosynthesis; coenzyme A biosynthesis; CoA from (R)-pantothenate: step 1/5. Its function is as follows. Catalyzes the phosphorylation of pantothenate (Pan), the first step in CoA biosynthesis. The chain is Type III pantothenate kinase 1 from Symbiobacterium thermophilum (strain DSM 24528 / JCM 14929 / IAM 14863 / T).